Here is a 185-residue protein sequence, read N- to C-terminus: Ribosome-recycling factor (185 aa).

The protein belongs to the RRF family.

Its subcellular location is the cytoplasm. In terms of biological role, responsible for the release of ribosomes from messenger RNA at the termination of protein biosynthesis. May increase the efficiency of translation by recycling ribosomes from one round of translation to another. The polypeptide is Ribosome-recycling factor (Pasteurella multocida (strain Pm70)).